The primary structure comprises 302 residues: MEPKVLSIQSWVCHGYVGNKCAVFALQHLGIEVDPINSVHLSNNTAYPTWKGESLTPNKLGDLFQGLEDNHLTSNYTHVLTGYNNSVQTLHTVLKIVKKLKSENPNLIYVCDPVLGDNNELYVPEDLVEVYKNEVIPNADYIFPNQTEVEFLTGIKIKNDQDALKAIDQFHKMGVKNVVITSLFFDTNPNDIIVIGSTINDDDNNNKYNQFKIKVGPKFNDYYTGTGDLLSSLLLGWSIREPTDLSLVCEKAISILYNIINETHNSKKSIPSNKEKQYYELRLVQSRKFIENSEIRFKSEKL.

Positions 10, 45, and 122 each coordinate substrate. ATP-binding positions include 181–182 and 215–227; these read TS and VGPK…TGTG. Asp228 provides a ligand contact to substrate.

The protein belongs to the pyridoxine kinase family. In terms of assembly, homodimer. It depends on a divalent metal cation as a cofactor.

The protein localises to the cytoplasm. The enzyme catalyses pyridoxal + ATP = pyridoxal 5'-phosphate + ADP + H(+). Its pathway is cofactor metabolism; pyridoxal 5'-phosphate salvage; pyridoxal 5'-phosphate from pyridoxal: step 1/1. In terms of biological role, required for synthesis of pyridoxal-5-phosphate from vitamin B6. The protein is Pyridoxal kinase (pykA) of Dictyostelium discoideum (Social amoeba).